A 150-amino-acid polypeptide reads, in one-letter code: Large ribosomal subunit protein uL11 (150 aa).

The tract at residues 83-111 (AAGLKPQGKRNRAKGSEKPGRQTAGTVTA) is disordered.

This sequence belongs to the universal ribosomal protein uL11 family. As to quaternary structure, part of the ribosomal stalk of the 50S ribosomal subunit. Interacts with L10 and the large rRNA to form the base of the stalk. L10 forms an elongated spine to which L12 dimers bind in a sequential fashion forming a multimeric L10(L12)X complex. In terms of processing, one or more lysine residues are methylated.

Its function is as follows. Forms part of the ribosomal stalk which helps the ribosome interact with GTP-bound translation factors. This chain is Large ribosomal subunit protein uL11, found in Paracoccus denitrificans (strain Pd 1222).